A 198-amino-acid polypeptide reads, in one-letter code: ATP-dependent Clp protease proteolytic subunit (198 aa).

Ser101 functions as the Nucleophile in the catalytic mechanism. His126 is an active-site residue.

Belongs to the peptidase S14 family. Component of the chloroplastic Clp protease core complex.

Its subcellular location is the plastid. The protein localises to the chloroplast stroma. The enzyme catalyses Hydrolysis of proteins to small peptides in the presence of ATP and magnesium. alpha-casein is the usual test substrate. In the absence of ATP, only oligopeptides shorter than five residues are hydrolyzed (such as succinyl-Leu-Tyr-|-NHMec, and Leu-Tyr-Leu-|-Tyr-Trp, in which cleavage of the -Tyr-|-Leu- and -Tyr-|-Trp bonds also occurs).. Its function is as follows. Cleaves peptides in various proteins in a process that requires ATP hydrolysis. Has a chymotrypsin-like activity. Plays a major role in the degradation of misfolded proteins. The sequence is that of ATP-dependent Clp protease proteolytic subunit from Solanum bulbocastanum (Wild potato).